The sequence spans 402 residues: Serine/threonine-protein phosphatase 4 regulatory subunit 2 (402 aa).

Residues asparagine 258–serine 402 form a disordered region. Residues threonine 266–asparagine 277 are compositionally biased toward polar residues. Residues aspartate 278–glutamate 319 are compositionally biased toward acidic residues. Basic and acidic residues predominate over residues aspartate 320–asparagine 337. Over residues asparagine 345 to aspartate 358 the composition is skewed to low complexity.

Belongs to the PPP4R2 family. As to quaternary structure, regulatory subunit (R2) of the histone H2A phosphatase complex (HTP-C) consisting of PPH3, PSY2 and PSY4.

Its subcellular location is the nucleus. Functionally, regulatory subunit of the histone H2A phosphatase complex, which dephosphorylates H2AS128ph (gamma-H2A) that has been displaced from sites of DNA lesions in the double-stranded DNA break repair process. Dephosphorylation is necessary for efficient recovery from the DNA damage checkpoint. This is Serine/threonine-protein phosphatase 4 regulatory subunit 2 (PSY4) from Candida glabrata (strain ATCC 2001 / BCRC 20586 / JCM 3761 / NBRC 0622 / NRRL Y-65 / CBS 138) (Yeast).